Reading from the N-terminus, the 300-residue chain is 4-hydroxy-tetrahydrodipicolinate synthase (300 aa).

Residue Thr-56 participates in pyruvate binding. Tyr-145 serves as the catalytic Proton donor/acceptor. The active-site Schiff-base intermediate with substrate is Lys-173. Pyruvate is bound at residue Val-215.

It belongs to the DapA family. As to quaternary structure, homotetramer; dimer of dimers.

It is found in the cytoplasm. It catalyses the reaction L-aspartate 4-semialdehyde + pyruvate = (2S,4S)-4-hydroxy-2,3,4,5-tetrahydrodipicolinate + H2O + H(+). It functions in the pathway amino-acid biosynthesis; L-lysine biosynthesis via DAP pathway; (S)-tetrahydrodipicolinate from L-aspartate: step 3/4. Functionally, catalyzes the condensation of (S)-aspartate-beta-semialdehyde [(S)-ASA] and pyruvate to 4-hydroxy-tetrahydrodipicolinate (HTPA). In Prochlorococcus marinus (strain MIT 9301), this protein is 4-hydroxy-tetrahydrodipicolinate synthase.